We begin with the raw amino-acid sequence, 760 residues long: Catalase-peroxidase (760 aa).

Positions 1 to 45 (MKGTPFRSPHLYQEGSSCMHRTIRSVAAVLTVVLSATIPMVPAWS) are cleaved as a signal peptide. Residues 124-245 (WHGAGTYRTY…LAATQMGLIY (122 aa)) constitute a cross-link (tryptophyl-tyrosyl-methioninium (Trp-Tyr) (with M-271)). Residue H125 is the Proton acceptor of the active site. Residues 245–271 (YVNPEGPNGVPDPVAAARDIREAFGGM) constitute a cross-link (tryptophyl-tyrosyl-methioninium (Tyr-Met) (with W-124)). Residue H286 coordinates heme b.

The protein belongs to the peroxidase family. Peroxidase/catalase subfamily. Homodimer or homotetramer. Heme b serves as cofactor. Formation of the three residue Trp-Tyr-Met cross-link is important for the catalase, but not the peroxidase activity of the enzyme.

It carries out the reaction H2O2 + AH2 = A + 2 H2O. The catalysed reaction is 2 H2O2 = O2 + 2 H2O. Its function is as follows. Bifunctional enzyme with both catalase and broad-spectrum peroxidase activity. The chain is Catalase-peroxidase from Granulibacter bethesdensis (strain ATCC BAA-1260 / CGDNIH1).